Reading from the N-terminus, the 508-residue chain is Photosystem II CP47 reaction center protein (508 aa).

Transmembrane regions (helical) follow at residues 21 to 36, 101 to 115, 140 to 156, 203 to 218, 237 to 252, and 457 to 472; these read AVHIMHTALVSGWAGS, IVFSGLCFLAAIWHW, GIHLFLSGLACFGFGAF, IAAGTLGILAGLFHLS, VLSSSIAAVFFAAFVV, and SFALLFFFGHIWHGAR.

It belongs to the PsbB/PsbC family. PsbB subfamily. PSII is composed of 1 copy each of membrane proteins PsbA, PsbB, PsbC, PsbD, PsbE, PsbF, PsbH, PsbI, PsbJ, PsbK, PsbL, PsbM, PsbT, PsbX, PsbY, PsbZ, Psb30/Ycf12, at least 3 peripheral proteins of the oxygen-evolving complex and a large number of cofactors. It forms dimeric complexes. Binds multiple chlorophylls. PSII binds additional chlorophylls, carotenoids and specific lipids. serves as cofactor.

It localises to the plastid. The protein resides in the chloroplast thylakoid membrane. One of the components of the core complex of photosystem II (PSII). It binds chlorophyll and helps catalyze the primary light-induced photochemical processes of PSII. PSII is a light-driven water:plastoquinone oxidoreductase, using light energy to abstract electrons from H(2)O, generating O(2) and a proton gradient subsequently used for ATP formation. This chain is Photosystem II CP47 reaction center protein, found in Nandina domestica (Heavenly bamboo).